The chain runs to 1361 residues: MSVVNFYGQLSNTQQFDQIRINIASPEQVRSWSFGEVIKPETINYRTFKPEKDGLFCARIFGPVKDYECLCGKYKRMKNRGITCEKCGVEVTVSRVRRERMGHIELAAPVAHIWFLKSLPSRISTLLDMTMRDIEKILYFENYVVVDPGLSILQKGELLTEEELQKAKDKYGEDAFTASIGAEVVQQMLKELDFPTLKQELYEELQNTTSEVKKKKLVKRLKLVEDFLESENKPEWMIMNVLPVMPPELRPLVMLDGGRFATSDLNELYRRVINRNNRLKKLIESKAPDIIVRNEKRMLQEAVDALFDNGRRGRAAKNANKRPFKSLSDMLKGKQGRFRQNLLGKRVDYSGRSVIVVGPELKLHQCGLPKKMALELFKPFIYSKLELYGIATTIKAAKRMVEAEKPEVWDVLEEVIREHPVLLNRAPTLHRLGIQAFEPLLIEGKAIQLHPLVCAAFNADFDGDQMAVHIPLSIEAQLEARVFMMSTNNILSPANGRPIIVPDKDIVLGLYYLTLAFDHEVGEGMMFSDLTEMEHALYNKFITIHTKIKYRRNQLNAEGKIVPVIVDTTYGRLMVGELLPSNPNIEYKFINKPLTKKDISLVIDLVYRHCGQKATVIFADQLMKLGFKYACSSGISFGMDDMVVPKSKIVHIDETQLEIKEFEQQYSNGLITYGEKYNKVIDAWSRCTDRVANDMMKEIAKPPVSDDSNQQKINSIYMMAISGARGSFQQIKQLGGMRGLMTKSNGQIIPTPIIANFKEGLTVFECFNSANGMRKGQIDTALKTASSGYLTRKLVDVAQDCIITEKDCNTDKGIEVKSIIEGGEVIVPLAEMILGRTAAINIYHPVTNDLILTKGELINESKLEQIESAGLDRIMIKSVLTCESSTGICAICYGRDLATGSLVSEGEAIGVIAAQSIGEPGTQLTMRTFHIGGAATKGAEVSSVEASYDAKVKILSRNVVINSEERKIVMSRNCELLLLDNNGNEKAHSKIPYGARLLVDEGDMVTKTQKLAEWDPYTIPIITEKSGKVLFKDMVEGISVRDVTDEATGIPSKVIIESKQYSRGAELRPRIQLLDAKGEIIMLSNGLEARYYLPVGAVLSVEDGVQISVGDIIARIPKESTTTKDITGGLPRVAELFEARRPKDHAVIAEIDGRVEFGKDYKSKRRIIIHPVDGSMGLEYMVPKGKHVVVNEGDFVKKGDLLIDGNPVLQDILKVMGVELLASYIVKEVQAVYRLQGVKIDDKHIEVIIRQMLQKVEITDSGGTTLLVGEKIDRREFDEINEKAIKNGLRPADAQLILQGITKSSLQTRSFISAASFQETTRVLTEAAIAGKVDKLRGLKENVIVGRLVPAGTGFLYGQNA.

The Zn(2+) site is built by cysteine 69, cysteine 71, cysteine 84, and cysteine 87. The Mg(2+) site is built by aspartate 460, aspartate 462, and aspartate 464. Positions 808, 882, 889, and 892 each coordinate Zn(2+).

The protein belongs to the RNA polymerase beta' chain family. The RNAP catalytic core consists of 2 alpha, 1 beta, 1 beta' and 1 omega subunit. When a sigma factor is associated with the core the holoenzyme is formed, which can initiate transcription. Mg(2+) serves as cofactor. Zn(2+) is required as a cofactor.

The enzyme catalyses RNA(n) + a ribonucleoside 5'-triphosphate = RNA(n+1) + diphosphate. DNA-dependent RNA polymerase catalyzes the transcription of DNA into RNA using the four ribonucleoside triphosphates as substrates. The protein is DNA-directed RNA polymerase subunit beta' of Rickettsia bellii (strain RML369-C).